The following is a 448-amino-acid chain: RuvB-like 2 (448 aa).

73 to 80 contacts ATP; it reads GEPGAGKT.

This sequence belongs to the RuvB family. As to quaternary structure, forms homohexameric rings. May form a dodecamer with ruvb-1 made of two stacked hexameric rings. Expressed in gonadal cells.

The protein localises to the cytoplasm. The protein resides in the nucleus. The catalysed reaction is ATP + H2O = ADP + phosphate + H(+). In terms of biological role, possesses single-stranded DNA-stimulated ATPase and ATP-dependent DNA helicase (5' to 3') activity suggesting a role in nuclear processes such as recombination and transcription. May participate in several chromatin remodeling complexes that mediate the ATP-dependent exchange of histones and remodel chromatin by shifting nucleosomes. Involvement in these complexes is likely required for transcriptional activation of selected genes and DNA repair in response to DNA damage. Has a role in gonadal development. Involved in the endoplasmic reticulum (ER)-associated degradation (ERAD) pathway where it negatively regulates expression of ER stress response genes. Specifically, negatively controls the expression of ER homeostasis regulator ckb-2 in a cdc-48.1/2-dependent manner. This Caenorhabditis elegans protein is RuvB-like 2.